Reading from the N-terminus, the 289-residue chain is uncharacterized protein (289 aa).

The HTH tetR-type domain maps to 2-62 (NEKKERIIKT…SACEYYIGMS (61 aa)). Residues 25-44 (TIQEIASECGISKGAFYLHF) constitute a DNA-binding region (H-T-H motif).

This is an uncharacterized protein from Bacillus subtilis (strain 168).